Consider the following 481-residue polypeptide: 3-isopropylmalate dehydratase large subunit (481 aa).

3 residues coordinate [4Fe-4S] cluster: cysteine 357, cysteine 417, and cysteine 420.

The protein belongs to the aconitase/IPM isomerase family. LeuC type 1 subfamily. As to quaternary structure, heterodimer of LeuC and LeuD. [4Fe-4S] cluster serves as cofactor.

The catalysed reaction is (2R,3S)-3-isopropylmalate = (2S)-2-isopropylmalate. It participates in amino-acid biosynthesis; L-leucine biosynthesis; L-leucine from 3-methyl-2-oxobutanoate: step 2/4. Its function is as follows. Catalyzes the isomerization between 2-isopropylmalate and 3-isopropylmalate, via the formation of 2-isopropylmaleate. The polypeptide is 3-isopropylmalate dehydratase large subunit (Mycolicibacterium gilvum (strain PYR-GCK) (Mycobacterium gilvum (strain PYR-GCK))).